Here is a 204-residue protein sequence, read N- to C-terminus: Tumor protein D53 (204 aa).

The interval 1-20 is disordered; that stretch reads MEAQAQGLLETEPLQGTDED. Residues 22–73 are a coiled coil; that stretch reads VASADFSSMLSEEEKEELKAELVQLEDEITTLRQVLSAKERHLVEIKQKLGM. 4 positions are modified to phosphoserine: Ser29, Ser86, Ser122, and Ser131. An Omega-N-methylarginine modification is found at Arg133. Phosphothreonine is present on Thr146. Phosphoserine occurs at positions 149 and 174.

This sequence belongs to the TPD52 family. As to quaternary structure, forms a homodimer or heterodimer with other members of the family.

This Homo sapiens (Human) protein is Tumor protein D53 (TPD52L1).